A 589-amino-acid chain; its full sequence is tRNA (guanine(26)-N(2))-dimethyltransferase 2 (589 aa).

The 457-residue stretch at 9–465 (TVIKEGEAEI…APMEVIWDIM (457 aa)) folds into the Trm1 methyltransferase domain. R36 contacts S-adenosyl-L-methionine. The segment at 51–122 (KQEHEAKSSK…RFAPREPKPP (72 aa)) is disordered. Composition is skewed to basic and acidic residues over residues 68–81 (VIEK…KEET) and 106–122 (DPAK…PKPP). S-adenosyl-L-methionine-binding residues include R134, D152, and V185. Residues C315, C318, C350, and C353 each contribute to the Zn(2+) site. The tract at residues 550–589 (LSQHHEELKEEDEEAEPEDNVQDKVDPKRQKTATDNITST) is disordered. The span at 558–569 (KEEDEEAEPEDN) shows a compositional bias: acidic residues.

Belongs to the class I-like SAM-binding methyltransferase superfamily. Trm1 family.

The enzyme catalyses guanosine(26) in tRNA + 2 S-adenosyl-L-methionine = N(2)-dimethylguanosine(26) in tRNA + 2 S-adenosyl-L-homocysteine + 2 H(+). Dimethylates a single guanine residue at position 26 of most tRNAs using S-adenosyl-L-methionine as donor of the methyl groups. This is tRNA (guanine(26)-N(2))-dimethyltransferase 2 from Arabidopsis thaliana (Mouse-ear cress).